The sequence spans 500 residues: Glycerol kinase (500 aa).

Threonine 13 serves as a coordination point for ADP. Positions 13, 14, and 15 each coordinate ATP. Threonine 13 is a binding site for sn-glycerol 3-phosphate. Arginine 17 provides a ligand contact to ADP. Residues arginine 83, glutamate 84, tyrosine 135, and aspartate 244 each coordinate sn-glycerol 3-phosphate. Arginine 83, glutamate 84, tyrosine 135, aspartate 244, and glutamine 245 together coordinate glycerol. ADP is bound by residues threonine 266, glycine 309, glycine 410, and asparagine 414. Threonine 266, glycine 309, and glycine 410 together coordinate ATP.

It belongs to the FGGY kinase family.

The enzyme catalyses glycerol + ATP = sn-glycerol 3-phosphate + ADP + H(+). It participates in polyol metabolism; glycerol degradation via glycerol kinase pathway; sn-glycerol 3-phosphate from glycerol: step 1/1. With respect to regulation, inhibited by fructose 1,6-bisphosphate (FBP). Functionally, key enzyme in the regulation of glycerol uptake and metabolism. Catalyzes the phosphorylation of glycerol to yield sn-glycerol 3-phosphate. The sequence is that of Glycerol kinase from Chromobacterium violaceum (strain ATCC 12472 / DSM 30191 / JCM 1249 / CCUG 213 / NBRC 12614 / NCIMB 9131 / NCTC 9757 / MK).